A 46-amino-acid chain; its full sequence is Cysteine-rich venom protein asurin-1 (46 aa).

The protein belongs to the CRISP family. In terms of processing, contains 8 disulfide bonds. In terms of tissue distribution, expressed by the venom gland.

It localises to the secreted. Functionally, blocks contraction of smooth muscle elicited by high potassium-induced depolarization, but does not block caffeine-stimulated contraction. May target voltage-gated calcium channels on smooth muscle. This is Cysteine-rich venom protein asurin-1 from Austrelaps superbus (Lowland copperhead snake).